The chain runs to 437 residues: MKVYIETMGCAMNSRDSEHLLSELSKLDYKETSDPKMADLILINTCSVREKPERKLFSEIGQFAKIKKPNAKIGVCGCTASHMGADILKKAPSVSFVLGARNVSKISQVIHKEKAVEVAIDYDESAYAFEFFEKKAQIRSLLNISIGCDKKCAYCIVPHTRGKEISIPMDLILKEAEKLANNGTKELMLLGQNVNNYGVRFSSEHAKVGFSDLLDKLSEIQGIERIRFTSPHPLHMNDAFLERFAQNPKVCKSIHMPLQSGSSAVLKMMRRGYSKEWFLNRVERLKALVPEVGISTDIIVGFPNESDKDFEDTMEVLEKVRFDTLYSFIYSPRPFTEAGAWKERVPLEISSLRLERLQNRHKEILEEKAKLEVGKTHVVLVENRREMDGQIVGFEGRSDTGKFIEVTCKEKKNPGELVRVEIISHSKGRLMATTKGN.

Residues 1-115 form the MTTase N-terminal domain; sequence MKVYIETMGC…ISQVIHKEKA (115 aa). Residues Cys-10, Cys-46, Cys-78, Cys-148, Cys-152, and Cys-155 each coordinate [4Fe-4S] cluster. Residues 134-367 form the Radical SAM core domain; that stretch reads KKAQIRSLLN…QNRHKEILEE (234 aa). Positions 370–436 constitute a TRAM domain; that stretch reads KLEVGKTHVV…KGRLMATTKG (67 aa).

This sequence belongs to the methylthiotransferase family. MiaB subfamily. In terms of assembly, monomer. [4Fe-4S] cluster serves as cofactor.

It is found in the cytoplasm. It carries out the reaction N(6)-dimethylallyladenosine(37) in tRNA + (sulfur carrier)-SH + AH2 + 2 S-adenosyl-L-methionine = 2-methylsulfanyl-N(6)-dimethylallyladenosine(37) in tRNA + (sulfur carrier)-H + 5'-deoxyadenosine + L-methionine + A + S-adenosyl-L-homocysteine + 2 H(+). Catalyzes the methylthiolation of N6-(dimethylallyl)adenosine (i(6)A), leading to the formation of 2-methylthio-N6-(dimethylallyl)adenosine (ms(2)i(6)A) at position 37 in tRNAs that read codons beginning with uridine. The sequence is that of tRNA-2-methylthio-N(6)-dimethylallyladenosine synthase from Helicobacter pylori (strain J99 / ATCC 700824) (Campylobacter pylori J99).